The primary structure comprises 198 residues: Thioredoxin reductase-like selenoprotein T homolog CG3887 (198 aa).

A signal peptide spans methionine 1 to alanine 25. Cysteines 49 and 52 form a disulfide.

This sequence belongs to the SelWTH family. SELT subfamily.

The catalysed reaction is [thioredoxin]-dithiol + NADP(+) = [thioredoxin]-disulfide + NADPH + H(+). Functionally, probably has thioredoxin reductase-like oxidoreductase activity. In Drosophila melanogaster (Fruit fly), this protein is Thioredoxin reductase-like selenoprotein T homolog CG3887.